A 1479-amino-acid chain; its full sequence is Chromosome partition protein MukB (1479 aa).

An ATP-binding site is contributed by 34–41 (GGNGAGKS). 5 coiled-coil regions span residues 337–418 (LNLV…QYQQ), 511–604 (QAER…APVW), 780–810 (RAAR…DVQK), 847–1116 (ELDR…AKAG), and 1206–1265 (DDPV…LQAV). Positions 666–783 (PGGSEDPRLN…EVPLFGRAAR (118 aa)) are flexible hinge.

Belongs to the SMC family. MukB subfamily. Homodimerization via its hinge domain. Binds to DNA via its C-terminal region. Interacts, and probably forms a ternary complex, with MukE and MukF via its C-terminal region. The complex formation is stimulated by calcium or magnesium. Interacts with tubulin-related protein FtsZ.

Its subcellular location is the cytoplasm. The protein resides in the nucleoid. Its function is as follows. Plays a central role in chromosome condensation, segregation and cell cycle progression. Functions as a homodimer, which is essential for chromosome partition. Involved in negative DNA supercoiling in vivo, and by this means organize and compact chromosomes. May achieve or facilitate chromosome segregation by condensation DNA from both sides of a centrally located replisome during cell division. This chain is Chromosome partition protein MukB, found in Pectobacterium atrosepticum (strain SCRI 1043 / ATCC BAA-672) (Erwinia carotovora subsp. atroseptica).